We begin with the raw amino-acid sequence, 124 residues long: Ribosome-binding factor A (124 aa).

This sequence belongs to the RbfA family. Monomer. Binds 30S ribosomal subunits, but not 50S ribosomal subunits or 70S ribosomes.

The protein resides in the cytoplasm. Functionally, one of several proteins that assist in the late maturation steps of the functional core of the 30S ribosomal subunit. Associates with free 30S ribosomal subunits (but not with 30S subunits that are part of 70S ribosomes or polysomes). Required for efficient processing of 16S rRNA. May interact with the 5'-terminal helix region of 16S rRNA. In Sorangium cellulosum (strain So ce56) (Polyangium cellulosum (strain So ce56)), this protein is Ribosome-binding factor A.